Consider the following 1460-residue polypeptide: DNA-binding protein RFX7 (1460 aa).

Residues Met-1 to Val-34 form a disordered region. Residues Ala-108–Ala-183 constitute a DNA-binding region (RFX-type winged-helix). The PxLPxI/L motif; mediates interaction with ANKRA2 and RFXANK motif lies at Pro-188–Leu-193. The disordered stretch occupies residues Gln-308–Leu-352. Ser-322 is subject to Phosphoserine. A compositionally biased stretch (polar residues) spans Thr-337 to Leu-352. Ser-379 is subject to Phosphoserine. A compositionally biased stretch (polar residues) spans Ser-404–Pro-416. Residues Ser-404–Arg-428 form a disordered region. Ser-418 and Ser-455 each carry phosphoserine. Residues Thr-481–Asn-513 are compositionally biased toward polar residues. 3 disordered regions span residues Thr-481 to Glu-585, Thr-632 to Pro-715, and Gln-917 to Pro-1015. Positions Ser-515–Val-535 are enriched in low complexity. Residues Val-537–Pro-549 are compositionally biased toward basic and acidic residues. 2 stretches are compositionally biased toward polar residues: residues Gln-563–Ser-583 and Thr-632–Ser-644. Thr-564 carries the post-translational modification Phosphothreonine. Residue Ser-662 is modified to Phosphoserine. Lys-704 bears the N6-acetyllysine mark. 2 stretches are compositionally biased toward polar residues: residues Thr-705–Pro-715 and Gln-917–His-933. The span at Thr-947 to Thr-963 shows a compositional bias: pro residues. Polar residues predominate over residues Gly-971–Cys-1009. Thr-988 bears the Phosphothreonine mark. Ser-1178 and Ser-1329 each carry phosphoserine.

This sequence belongs to the RFX family. As to quaternary structure, interacts (via PxLPxI/L motif) with RFXANK (via ankyrin repeats). Interacts (via PxLPxI/L motif) with ANKRA2 (via ankyrin repeats). In terms of tissue distribution, widely expressed in many different tissue types including thymus and placenta, with high expression in brain. Expressed in both inhibitory and excitatory neurons in cortex.

It is found in the nucleus. Transcription factor. Acts as a transcriptional activator by binding to promoter regions of target genes, such as PDCD4, PIK3IP1, MXD4, PNRC1, and RFX5. Plays a role in natural killer (NK) cell maintenance and immunity. May play a role in the process of ciliogenesis in the neural tube and neural tube closure. This is DNA-binding protein RFX7 from Homo sapiens (Human).